Reading from the N-terminus, the 172-residue chain is Adenine phosphoribosyltransferase (172 aa).

Belongs to the purine/pyrimidine phosphoribosyltransferase family. In terms of assembly, homodimer.

The protein localises to the cytoplasm. It carries out the reaction AMP + diphosphate = 5-phospho-alpha-D-ribose 1-diphosphate + adenine. It functions in the pathway purine metabolism; AMP biosynthesis via salvage pathway; AMP from adenine: step 1/1. Its function is as follows. Catalyzes a salvage reaction resulting in the formation of AMP, that is energically less costly than de novo synthesis. The polypeptide is Adenine phosphoribosyltransferase (Lactiplantibacillus plantarum (strain ATCC BAA-793 / NCIMB 8826 / WCFS1) (Lactobacillus plantarum)).